Reading from the N-terminus, the 510-residue chain is Bifunctional pantoate ligase/cytidylate kinase (510 aa).

Residues 1–276 form a pantoate--beta-alanine ligase region; the sequence is MKKVIIRKTE…CGETRLIDHV (276 aa). 29 to 36 serves as a coordination point for ATP; it reads MGNLHNGH. His-36 acts as the Proton donor in catalysis. Gln-61 is a (R)-pantoate binding site. Gln-61 contacts beta-alanine. Residue 150–153 participates in ATP binding; it reads GEKD. Residue Gln-156 participates in (R)-pantoate binding. 187–190 serves as a coordination point for ATP; that stretch reads LSSR. A cytidylate kinase region spans residues 277–510; the sequence is FLMKRRPIIA…DKIPKETEIK (234 aa).

The protein in the N-terminal section; belongs to the pantothenate synthetase family. In the C-terminal section; belongs to the cytidylate kinase family. Type 1 subfamily.

The protein localises to the cytoplasm. It carries out the reaction (R)-pantoate + beta-alanine + ATP = (R)-pantothenate + AMP + diphosphate + H(+). It catalyses the reaction CMP + ATP = CDP + ADP. The enzyme catalyses dCMP + ATP = dCDP + ADP. It functions in the pathway cofactor biosynthesis; (R)-pantothenate biosynthesis; (R)-pantothenate from (R)-pantoate and beta-alanine: step 1/1. Its function is as follows. Catalyzes the condensation of pantoate with beta-alanine in an ATP-dependent reaction via a pantoyl-adenylate intermediate. In terms of biological role, catalyzes the transfer of a phosphate group from ATP to either CMP or dCMP to form CDP or dCDP and ADP, respectively. This Prochlorococcus marinus (strain MIT 9215) protein is Bifunctional pantoate ligase/cytidylate kinase.